We begin with the raw amino-acid sequence, 597 residues long: Elongation factor 4 (597 aa).

The region spanning 2–184 (DHIRNFSIIA…SLIAKVPPPK (183 aa)) is the tr-type G domain. Residues 14–19 (DHGKST) and 131–134 (NKID) contribute to the GTP site.

This sequence belongs to the TRAFAC class translation factor GTPase superfamily. Classic translation factor GTPase family. LepA subfamily.

The protein resides in the cell inner membrane. It catalyses the reaction GTP + H2O = GDP + phosphate + H(+). In terms of biological role, required for accurate and efficient protein synthesis under certain stress conditions. May act as a fidelity factor of the translation reaction, by catalyzing a one-codon backward translocation of tRNAs on improperly translocated ribosomes. Back-translocation proceeds from a post-translocation (POST) complex to a pre-translocation (PRE) complex, thus giving elongation factor G a second chance to translocate the tRNAs correctly. Binds to ribosomes in a GTP-dependent manner. This chain is Elongation factor 4, found in Burkholderia cenocepacia (strain HI2424).